Consider the following 430-residue polypeptide: MLDAKYFREELDQTAKKLATRGFDLDVAKLQKLEEQRKEVQVRTEQLQAERNSRSKAIGKAKASGEDIQPLLDAVSDLGEQLDNAKEELKVIQQELNDIIMGVPNLPADEVPEGADEDENQEVLTWGKPKSFDFEVKDHVDLGEALAKGMDFETAAKLTGARFVVMRGGIARMHRALTQFMLDLHTDEHGYLETYVPYMVNQDSLYGTGQLPKFGKDLFHIEGESQDQIPMSLIPTAEVPLTNLYRDEIADEEELPLKFTAHTPCFRSEAGSHGRDTRGLIRQHQFDKVELVWLVKPEQSMDALEQLTGHAETVLQKLELPYRKVLLCTGDMGFGAAKTYDLEVWLPAQEAYREISSCSNMQDFQARRMQARFRRKGAKKPELMHTLNGSGLAVGRALVAVLENYQQEDGSIVVPEVLRPYMGGVEVLKA.

Residue 236 to 238 (TAE) participates in L-serine binding. 267–269 (RSE) is an ATP binding site. Glu290 lines the L-serine pocket. 354 to 357 (EISS) contacts ATP. Ser390 is an L-serine binding site.

The protein belongs to the class-II aminoacyl-tRNA synthetase family. Type-1 seryl-tRNA synthetase subfamily. In terms of assembly, homodimer. The tRNA molecule binds across the dimer.

Its subcellular location is the cytoplasm. It catalyses the reaction tRNA(Ser) + L-serine + ATP = L-seryl-tRNA(Ser) + AMP + diphosphate + H(+). The enzyme catalyses tRNA(Sec) + L-serine + ATP = L-seryl-tRNA(Sec) + AMP + diphosphate + H(+). Its pathway is aminoacyl-tRNA biosynthesis; selenocysteinyl-tRNA(Sec) biosynthesis; L-seryl-tRNA(Sec) from L-serine and tRNA(Sec): step 1/1. Catalyzes the attachment of serine to tRNA(Ser). Is also able to aminoacylate tRNA(Sec) with serine, to form the misacylated tRNA L-seryl-tRNA(Sec), which will be further converted into selenocysteinyl-tRNA(Sec). The protein is Serine--tRNA ligase of Idiomarina loihiensis (strain ATCC BAA-735 / DSM 15497 / L2-TR).